Consider the following 297-residue polypeptide: Ribosomal RNA small subunit methyltransferase H (297 aa).

Residues 37–39 (GGH), E56, F87, D102, and H109 each bind S-adenosyl-L-methionine.

Belongs to the methyltransferase superfamily. RsmH family.

Its subcellular location is the cytoplasm. It carries out the reaction cytidine(1402) in 16S rRNA + S-adenosyl-L-methionine = N(4)-methylcytidine(1402) in 16S rRNA + S-adenosyl-L-homocysteine + H(+). In terms of biological role, specifically methylates the N4 position of cytidine in position 1402 (C1402) of 16S rRNA. The polypeptide is Ribosomal RNA small subunit methyltransferase H (Borrelia hermsii (strain HS1 / DAH)).